The primary structure comprises 392 residues: MSVRESFNPESYELDKSFRLTRFAELKGTGCKVPQDVLQKLLESLQENHFQEDEQFLGAVMPRLGIGMDTCVIPLRHGGLSLVQTTDYIYPIVDDPYMMGRIACANVLSDLYAMGVTECDNMLMLLGVSNKLTDRERDKVMPLIIQGFKDAAEEAGTSVTGGQTVLNPWVVLGGVATTVCQPNEFIMPDNAVPGDVLVLTKPLGTQVAVAVHQWLDIPEKWNKIKLVVTQEDVELAYQEAMMNMARLNRTAAGLMHTFNAHAATDITGFGILGHAQNLAKQQRNEVSFVIHNLPVLAKMAAVSKACGNMFGLMHGSCPETSGGLLICLPREQAARFCAEIKSPKYGEGHQAWIIGIVEKGNRTARIIDKPRIIEVAPQVASQNVNPTPGATS.

Cys31 is a catalytic residue. Residues Lys32, 67 to 69, Asp87, Asp110, and 161 to 164 each bind ATP; these read GMD and GGQT. Asp69 provides a ligand contact to Mg(2+). Asp110 provides a ligand contact to Mg(2+). A Mg(2+)-binding site is contributed by Asp265.

Belongs to the selenophosphate synthase 1 family. Class II subfamily. As to quaternary structure, homodimer. Mg(2+) is required as a cofactor.

The protein resides in the cell membrane. Its subcellular location is the nucleus membrane. The catalysed reaction is hydrogenselenide + ATP + H2O = selenophosphate + AMP + phosphate + 2 H(+). Functionally, synthesizes selenophosphate from selenide and ATP. This is Selenide, water dikinase 1 (sephs1) from Xenopus tropicalis (Western clawed frog).